The chain runs to 908 residues: 26S proteasome non-ATPase regulatory subunit 2 (908 aa).

Residue methionine 1 is modified to N-acetylmethionine. The segment at 1-52 (MEEGGRDKAPLQPQQPPATSPGSGDEKPSGKERRDAGDKDKEQELSEEDKQL) is disordered. The span at 24–52 (GDEKPSGKERRDAGDKDKEQELSEEDKQL) shows a compositional bias: basic and acidic residues. Residues serine 29 and serine 147 each carry the phosphoserine modification. Position 194 is a phosphotyrosine (tyrosine 194). Residues serine 361 and serine 363 each carry the phosphoserine modification. PC repeat units follow at residues 409–442 (SAAA…YIKS), 443–479 (GALL…TMRL), 480–514 (GSIF…SMEV), 517–551 (VTAL…TELK), and 560–589 (LGLG…PFRS). Position 551 is an N6-acetyllysine (lysine 551). A compositionally biased stretch (basic and acidic residues) spans 623-643 (KEKEEDKDKKEKKDKDKKEAP). Residues 623–645 (KEKEEDKDKKEKKDKDKKEAPAD) are disordered. PC repeat units lie at residues 692-723 (LALA…EVSY) and 742-757 (AAML…KDPN). Positions 708–903 (DTLSKFSHDA…LEGFVILRKN (196 aa)) are required for interaction with UBLCP1.

Belongs to the proteasome subunit S2 family. In terms of assembly, component of the 19S proteasome regulatory particle complex. The 26S proteasome consists of a 20S core particle (CP) and two 19S regulatory subunits (RP). The regulatory particle is made of a lid composed of 9 subunits, a base containing 6 ATPases and few additional components including PSMD2. Interacts with RPGRIP1L. Interacts with CRY1 in a KDM8-dependent manner. Interacts (via C-terminus) with phosphatase UBLCP1 (via ubiquitin-like domain); the interaction recruits UBLCP1 to the 19S regulatory particle where it dephosphorylates 19S subunit PSMC2/RPT1 which impairs PSMC2 ATPase activity and disrupts 26S proteasome assembly.

In terms of biological role, component of the 26S proteasome, a multiprotein complex involved in the ATP-dependent degradation of ubiquitinated proteins. This complex plays a key role in the maintenance of protein homeostasis by removing misfolded or damaged proteins, which could impair cellular functions, and by removing proteins whose functions are no longer required. Therefore, the proteasome participates in numerous cellular processes, including cell cycle progression, apoptosis, or DNA damage repair. Functionally, binds to the intracellular domain of tumor necrosis factor type 1 receptor. The binding domain of TRAP1 and TRAP2 resides outside the death domain of TNFR1. The chain is 26S proteasome non-ATPase regulatory subunit 2 (PSMD2) from Bos taurus (Bovine).